We begin with the raw amino-acid sequence, 914 residues long: Protein translocase subunit SecA (914 aa).

ATP-binding positions include Gln86, 104–108 (GEGKT), and Asp512. 4 residues coordinate Zn(2+): Cys898, Cys900, Cys909, and His910.

It belongs to the SecA family. In terms of assembly, monomer and homodimer. Part of the essential Sec protein translocation apparatus which comprises SecA, SecYEG and auxiliary proteins SecDF-YajC and YidC. Zn(2+) serves as cofactor.

It localises to the cell inner membrane. The protein localises to the cytoplasm. The catalysed reaction is ATP + H2O + cellular proteinSide 1 = ADP + phosphate + cellular proteinSide 2.. Functionally, part of the Sec protein translocase complex. Interacts with the SecYEG preprotein conducting channel. Has a central role in coupling the hydrolysis of ATP to the transfer of proteins into and across the cell membrane, serving both as a receptor for the preprotein-SecB complex and as an ATP-driven molecular motor driving the stepwise translocation of polypeptide chains across the membrane. The protein is Protein translocase subunit SecA of Bordetella petrii (strain ATCC BAA-461 / DSM 12804 / CCUG 43448).